The sequence spans 363 residues: Carbamoyl phosphate synthase small chain (363 aa).

Residues 1 to 172 (MTKRILMLED…AFASPGDGKR (172 aa)) are CPSase. L-glutamine-binding residues include Ser46, Gly220, and Gly222. The region spanning 172–359 (RVVLVDYGVK…MEMMNGKEEG (188 aa)) is the Glutamine amidotransferase type-1 domain. Cys247 (nucleophile) is an active-site residue. L-glutamine-binding residues include Leu248, Gln251, Asn289, Gly291, and Tyr292. Catalysis depends on residues His332 and Glu334.

The protein belongs to the CarA family. Composed of two chains; the small (or glutamine) chain promotes the hydrolysis of glutamine to ammonia, which is used by the large (or ammonia) chain to synthesize carbamoyl phosphate. Tetramer of heterodimers (alpha,beta)4.

The enzyme catalyses hydrogencarbonate + L-glutamine + 2 ATP + H2O = carbamoyl phosphate + L-glutamate + 2 ADP + phosphate + 2 H(+). It catalyses the reaction L-glutamine + H2O = L-glutamate + NH4(+). It functions in the pathway amino-acid biosynthesis; L-arginine biosynthesis; carbamoyl phosphate from bicarbonate: step 1/1. It participates in pyrimidine metabolism; UMP biosynthesis via de novo pathway; (S)-dihydroorotate from bicarbonate: step 1/3. Small subunit of the glutamine-dependent carbamoyl phosphate synthetase (CPSase). CPSase catalyzes the formation of carbamoyl phosphate from the ammonia moiety of glutamine, carbonate, and phosphate donated by ATP, constituting the first step of 2 biosynthetic pathways, one leading to arginine and/or urea and the other to pyrimidine nucleotides. The small subunit (glutamine amidotransferase) binds and cleaves glutamine to supply the large subunit with the substrate ammonia. This Listeria monocytogenes serovar 1/2a (strain ATCC BAA-679 / EGD-e) protein is Carbamoyl phosphate synthase small chain.